A 474-amino-acid chain; its full sequence is Trehalose-6-phosphate synthase (474 aa).

Arginine 10 lines the D-glucose 6-phosphate pocket. UDP-alpha-D-glucose is bound at residue 22–23; sequence GG. Positions 77 and 131 each coordinate D-glucose 6-phosphate. UDP-alpha-D-glucose contacts are provided by arginine 263 and lysine 268. Arginine 301 contacts D-glucose 6-phosphate. Residues phenylalanine 340 and 366 to 370 each bind UDP-alpha-D-glucose; that span reads LVAKE.

It belongs to the glycosyltransferase 20 family. As to quaternary structure, homotetramer.

The enzyme catalyses D-glucose 6-phosphate + UDP-alpha-D-glucose = alpha,alpha-trehalose 6-phosphate + UDP + H(+). It functions in the pathway glycan biosynthesis; trehalose biosynthesis. Its function is as follows. Probably involved in the osmoprotection via the biosynthesis of trehalose. Catalyzes the transfer of glucose from UDP-alpha-D-glucose (UDP-Glc) to D-glucose 6-phosphate (Glc-6-P) to form trehalose-6-phosphate. Acts with retention of the anomeric configuration of the UDP-sugar donor. This is Trehalose-6-phosphate synthase from Pseudomonas savastanoi (Pseudomonas syringae pv. savastanoi).